An 832-amino-acid polypeptide reads, in one-letter code: Dolichyl-phosphate-mannose--protein mannosyltransferase 6 (832 aa).

The interval 1–44 is disordered; it reads MATGYSTGVSPFDLDENNHNDSIHHRHQNHHSQSHDSSGERDDT. N-linked (GlcNAc...) asparagine glycans are attached at residues Asn-20 and Asn-59. A run of 7 helical transmembrane segments spans residues 135–155, 175–194, 206–227, 232–252, 266–286, 293–311, and 327–347; these read FYFDVHPPLGKLLIGLSGYLA, YVFMRIFNCFFGILVTPLAY, TCWLIAFMVIFEQLSLTLSKFI, MLLFFTVLTMYCLVKVHTLAI, LEIKWYILTGISIGCVCSVKW, ALVGFYTIVDLWIKFYQTF, and LIHWVVRIFTLIIIPMTIYVA. N-linked (GlcNAc...) asparagine glycosylation is present at Asn-357. The MIR 1 domain occupies 383–437; sequence PRSVAFGSLVTIRSQGLSPNLIHSHPHNYPQGSQEQQVTTYGFKDDNNEFLFEFG. Asn-453 carries an N-linked (GlcNAc...) asparagine glycan. MIR domains follow at residues 466 to 522 and 537 to 595; these read HVII…IEIQ and PSEI…IEKH. The next 4 membrane-spanning stretches (helical) occupy residues 676-696, 723-743, 755-775, and 787-807; these read ITWISTIALIVCPLYLLVVGI, LLAARALLPLAGWVLHYVPFI, VPALYFAIFVAGFIVDAILNL, and IFKVVIYSTLYLVICISFWYF.

Belongs to the glycosyltransferase 39 family.

It is found in the endoplasmic reticulum membrane. The catalysed reaction is a di-trans,poly-cis-dolichyl beta-D-mannosyl phosphate + L-seryl-[protein] = 3-O-(alpha-D-mannosyl)-L-seryl-[protein] + a di-trans,poly-cis-dolichyl phosphate + H(+). It carries out the reaction a di-trans,poly-cis-dolichyl beta-D-mannosyl phosphate + L-threonyl-[protein] = 3-O-(alpha-D-mannosyl)-L-threonyl-[protein] + a di-trans,poly-cis-dolichyl phosphate + H(+). It participates in protein modification; protein glycosylation. Functionally, protein mannosyltransferase (PMT) involved in hyphal morphogenesis and drug sensitivity. Transfers mannose from Dol-P-mannose to Ser or Thr residues on proteins. PMT1, PMT2 and PMT4 account for most of the protein-O-glycosylation activity, while PMT5 and PMT6 may specifically modulate a much narrower spectrum of target proteins. Required for biofilm formation and virulence. The chain is Dolichyl-phosphate-mannose--protein mannosyltransferase 6 (PMT6) from Candida albicans (strain SC5314 / ATCC MYA-2876) (Yeast).